Reading from the N-terminus, the 298-residue chain is Ribosomal RNA small subunit methyltransferase H (298 aa).

S-adenosyl-L-methionine-binding positions include 46-48 (GGH), D65, F92, D108, and H115.

The protein belongs to the methyltransferase superfamily. RsmH family.

The protein localises to the cytoplasm. The enzyme catalyses cytidine(1402) in 16S rRNA + S-adenosyl-L-methionine = N(4)-methylcytidine(1402) in 16S rRNA + S-adenosyl-L-homocysteine + H(+). Its function is as follows. Specifically methylates the N4 position of cytidine in position 1402 (C1402) of 16S rRNA. The protein is Ribosomal RNA small subunit methyltransferase H of Nostoc punctiforme (strain ATCC 29133 / PCC 73102).